Consider the following 185-residue polypeptide: Translation initiation factor IF-3 (185 aa).

This sequence belongs to the IF-3 family. As to quaternary structure, monomer.

The protein resides in the cytoplasm. Functionally, IF-3 binds to the 30S ribosomal subunit and shifts the equilibrium between 70S ribosomes and their 50S and 30S subunits in favor of the free subunits, thus enhancing the availability of 30S subunits on which protein synthesis initiation begins. The polypeptide is Translation initiation factor IF-3 (Rickettsia prowazekii (strain Madrid E)).